We begin with the raw amino-acid sequence, 357 residues long: Probable leucine aminopeptidase MCYG_04170 (357 aa).

A signal peptide spans 1 to 15; it reads MKVLAALALSALALA. N-linked (GlcNAc...) asparagine glycosylation occurs at Asn76. His167 and Asp185 together coordinate Zn(2+). A glycan (N-linked (GlcNAc...) asparagine) is linked at Asn186. The Zn(2+) site is built by Glu224 and Asp251. The cysteines at positions 291 and 295 are disulfide-linked. His324 is a binding site for Zn(2+).

Belongs to the peptidase M28 family. M28E subfamily. As to quaternary structure, monomer. It depends on Zn(2+) as a cofactor.

The protein resides in the secreted. Functionally, probable extracellular aminopeptidase which contributes to pathogenicity. The chain is Probable leucine aminopeptidase MCYG_04170 from Arthroderma otae (strain ATCC MYA-4605 / CBS 113480) (Microsporum canis).